The sequence spans 220 residues: Vesicle-associated protein 2-1 (220 aa).

At methionine 1 the chain carries N-acetylmethionine. Over 1–196 the chain is Cytoplasmic; that stretch reads MTGVGENQLI…RNSGNGLSLK (196 aa). The residue at position 2 (threonine 2) is an N-acetylthreonine; in Vesicle-associated protein 2-1, N-terminally processed. The region spanning 9 to 129 is the MSP domain; sequence LISIQPDELK…TECKLKVSYI (121 aa). Residues 133–154 are disordered; the sequence is TTQRSSESGATNGDGQSSETIS. Positions 153-188 form a coiled coil; the sequence is ISTIQRLKEERDAAVKQTQQLQHELETVRRRRNQRN. Residues 197-217 traverse the membrane as a helical; Anchor for type IV membrane protein segment; the sequence is LAAMVGLIGLIIGFILKLTLA.

It belongs to the VAMP-associated protein (VAP) (TC 9.B.17) family.

Its subcellular location is the endoplasmic reticulum membrane. May play a role in vesicle trafficking. This chain is Vesicle-associated protein 2-1 (PVA21), found in Arabidopsis thaliana (Mouse-ear cress).